The primary structure comprises 915 residues: Metabotropic glutamate receptor 7 (915 aa).

The N-terminal stretch at 1–34 (MVQLGKLLRVLTLMKFPCCVLEVLLCVLAAAARG) is a signal peptide. Residues 35–590 (QEMYAPHSIR…IIKLEWHSPW (556 aa)) are Extracellular-facing. Cysteine 67 and cysteine 109 are disulfide-bonded. Asparagine 98 carries an N-linked (GlcNAc...) asparagine glycan. Residues serine 159, 180 to 182 (AST), tyrosine 230, and aspartate 314 contribute to the L-glutamate site. Intrachain disulfides connect cysteine 249–cysteine 541, cysteine 374–cysteine 390, cysteine 430–cysteine 437, cysteine 523–cysteine 542, cysteine 527–cysteine 545, cysteine 548–cysteine 560, and cysteine 563–cysteine 576. Position 407 (lysine 407) interacts with L-glutamate. Asparagine 458 and asparagine 486 each carry an N-linked (GlcNAc...) asparagine glycan. A glycan (N-linked (GlcNAc...) asparagine) is linked at asparagine 572. A helical transmembrane segment spans residues 591–615 (AVIPVFLAMLGIIATIFVMATFIRY). Residues 616–627 (NDTPIVRASGRE) are Cytoplasmic-facing. The helical transmembrane segment at 628 to 648 (LSYVLLTGIFLCYIITFLMIA) threads the bilayer. At 649–654 (KPDVAV) the chain is on the extracellular side. The chain crosses the membrane as a helical span at residues 655-675 (CSFRRVFLGLGMCISYAALLT). The Cytoplasmic portion of the chain corresponds to 676 to 702 (KTNRIYRIFEQGKKSVTAPRLISPTSQ). Residues 703–723 (LAITSSLISVQLLGVFIWFGV) form a helical membrane-spanning segment. The Extracellular segment spans residues 724–753 (DPPNIIIDYDEHKTMNPEQARGVLKCDITD). A helical transmembrane segment spans residues 754–775 (LQIICSLGYSILLMVTCTVYAI). At 776–788 (KTRGVPENFNEAK) the chain is on the cytoplasmic side. A helical membrane pass occupies residues 789–810 (PIGFTMYTTCIVWLAFIPIFFG). At 811–825 (TAQSAEKLYIQTTTL) the chain is on the extracellular side. The chain crosses the membrane as a helical span at residues 826–850 (TISMNLSASVALGMLYMPKVYIIIF). The Cytoplasmic portion of the chain corresponds to 851-915 (HPELNVQKRK…KYVSYNNLVI (65 aa)). The segment at 874-895 (SRLSHKPSDRPNGEAKTELCEN) is disordered. Residues 879–892 (KPSDRPNGEAKTEL) are compositionally biased toward basic and acidic residues. Residue serine 900 is modified to Phosphoserine.

Belongs to the G-protein coupled receptor 3 family. Homodimer. Interacts with PICK1. In terms of tissue distribution, widely distributed throughout the brain.

It is found in the cell membrane. G-protein coupled receptor activated by glutamate that regulates axon outgrowth through the MAPK-cAMP-PKA signaling pathway during neuronal development. Ligand binding causes a conformation change that triggers signaling via guanine nucleotide-binding proteins (G proteins) and modulates the activity of downstream effectors, such as adenylate cyclase that it inhibits. The chain is Metabotropic glutamate receptor 7 (Grm7) from Rattus norvegicus (Rat).